The following is a 183-amino-acid chain: Threonylcarbamoyl-AMP synthase (183 aa).

The region spanning 1 to 183 (MNIQQIVEQL…LFTHQLFRQG (183 aa)) is the YrdC-like domain.

The protein belongs to the SUA5 family. TsaC subfamily.

The protein resides in the cytoplasm. It carries out the reaction L-threonine + hydrogencarbonate + ATP = L-threonylcarbamoyladenylate + diphosphate + H2O. Its function is as follows. Required for the formation of a threonylcarbamoyl group on adenosine at position 37 (t(6)A37) in tRNAs that read codons beginning with adenine. Catalyzes the conversion of L-threonine, HCO(3)(-)/CO(2) and ATP to give threonylcarbamoyl-AMP (TC-AMP) as the acyladenylate intermediate, with the release of diphosphate. The protein is Threonylcarbamoyl-AMP synthase of Pasteurella multocida (strain Pm70).